The chain runs to 267 residues: Orotidine 5'-phosphate decarboxylase (267 aa).

Residues aspartate 38, lysine 60–histidine 62, aspartate 92–threonine 101, tyrosine 218, and arginine 236 contribute to the substrate site. Catalysis depends on lysine 94, which acts as the Proton donor.

This sequence belongs to the OMP decarboxylase family.

The enzyme catalyses orotidine 5'-phosphate + H(+) = UMP + CO2. The protein operates within pyrimidine metabolism; UMP biosynthesis via de novo pathway; UMP from orotate: step 2/2. The protein is Orotidine 5'-phosphate decarboxylase (URA3) of Debaryomyces hansenii (strain ATCC 36239 / CBS 767 / BCRC 21394 / JCM 1990 / NBRC 0083 / IGC 2968) (Yeast).